We begin with the raw amino-acid sequence, 321 residues long: Cytochrome f (321 aa).

The signal sequence occupies residues 1-35; that stretch reads MQNRKTYDDWVKKWITQSISVLIMIDIMTRTSIAN. 4 residues coordinate heme: Y37, C57, C60, and H61. Residues 287–307 form a helical membrane-spanning segment; the sequence is VQGLLLFLASVVLAQIFLVLK.

Belongs to the cytochrome f family. The 4 large subunits of the cytochrome b6-f complex are cytochrome b6, subunit IV (17 kDa polypeptide, petD), cytochrome f and the Rieske protein, while the 4 small subunits are PetG, PetL, PetM and PetN. The complex functions as a dimer. Heme serves as cofactor.

It is found in the plastid. Its subcellular location is the chloroplast thylakoid membrane. Component of the cytochrome b6-f complex, which mediates electron transfer between photosystem II (PSII) and photosystem I (PSI), cyclic electron flow around PSI, and state transitions. The chain is Cytochrome f from Cryptomeria japonica (Japanese cedar).